The primary structure comprises 279 residues: Dermonecrotic toxin LspiSicTox-betaIE3ii (279 aa).

His-5 is a catalytic residue. Residues Glu-25 and Asp-27 each coordinate Mg(2+). Catalysis depends on His-41, which acts as the Nucleophile. Disulfide bonds link Cys-45-Cys-51 and Cys-47-Cys-190. Asp-85 lines the Mg(2+) pocket.

The protein belongs to the arthropod phospholipase D family. Class II subfamily. Mg(2+) serves as cofactor. In terms of tissue distribution, expressed by the venom gland.

The protein resides in the secreted. It catalyses the reaction an N-(acyl)-sphingosylphosphocholine = an N-(acyl)-sphingosyl-1,3-cyclic phosphate + choline. It carries out the reaction an N-(acyl)-sphingosylphosphoethanolamine = an N-(acyl)-sphingosyl-1,3-cyclic phosphate + ethanolamine. The enzyme catalyses a 1-acyl-sn-glycero-3-phosphocholine = a 1-acyl-sn-glycero-2,3-cyclic phosphate + choline. The catalysed reaction is a 1-acyl-sn-glycero-3-phosphoethanolamine = a 1-acyl-sn-glycero-2,3-cyclic phosphate + ethanolamine. Dermonecrotic toxins cleave the phosphodiester linkage between the phosphate and headgroup of certain phospholipids (sphingolipid and lysolipid substrates), forming an alcohol (often choline) and a cyclic phosphate. This toxin acts on sphingomyelin (SM). It may also act on ceramide phosphoethanolamine (CPE), lysophosphatidylcholine (LPC) and lysophosphatidylethanolamine (LPE), but not on lysophosphatidylserine (LPS), and lysophosphatidylglycerol (LPG). It acts by transphosphatidylation, releasing exclusively cyclic phosphate products as second products. Induces dermonecrosis, hemolysis, increased vascular permeability, edema, inflammatory response, and platelet aggregation. This chain is Dermonecrotic toxin LspiSicTox-betaIE3ii, found in Loxosceles spinulosa (Recluse spider).